Reading from the N-terminus, the 1812-residue chain is Sperm flagellar protein 2 (1812 aa).

Residues 1–105 (MSEILCHWLN…LLYQLYIALQ (105 aa)) form the Calponin-homology (CH) domain. 2 coiled-coil regions span residues 178–260 (LENF…KDLQ) and 374–403 (EERRLKDFQDALDREAALAKQAKIDYEEQA). Positions 618-630 (EEKASPVRQESGD) are enriched in basic and acidic residues. The interval 618-658 (EEKASPVRQESGDRSQNLHNVLSAEGTPETEDETRLSTKKT) is disordered. Coiled coils occupy residues 724 to 750 (LNQAKLLEEALTGFNRNLIELEGKKSQ), 803 to 827 (ENINQRVAAENQDMDEDQNLRDQIQ), and 868 to 897 (KEMFMAEIMKKENKAKKKSEEKEAEKKEEF). Residues 879-897 (ENKAKKKSEEKEAEKKEEF) are compositionally biased toward basic and acidic residues. Disordered stretches follow at residues 879-1002 (ENKA…KPGS), 1272-1322 (EEKE…APVI), and 1793-1812 (EHIQGSDGESSPSRLTEEKK). Residues 902-913 (ATPPTPPAPPPS) are compositionally biased toward pro residues. Basic and acidic residues-rich tracts occupy residues 914-929 (EPEKEKEAHPPHERSK), 943-961 (HGNRESPQEGKGKKSETSP), and 1272-1285 (EEKENQPADTKEKP). Residues 1292–1310 (KKVKKEPPKKKREDKKGKG) show a composition bias toward basic residues. The segment at 1317–1669 (ESAPVITVEE…AEKTSSFIDM (353 aa)) is interaction with IFT20.

Interacts (via C-terminus) with IFT20. Interacts with DYNC1I2. Predominantly expressed in ciliated tissues. Mainly expressed in testis, followed by trachea. Also expressed at lower level in lung, kidney and liver.

Its subcellular location is the cell projection. The protein localises to the cilium. It localises to the flagellum. The protein resides in the cytoplasm. It is found in the golgi apparatus. Functionally, required for correct axoneme development in spermatozoa. Important for normal development of the manchette and sperm head morphology. Essential for male fertility. Plays a role in localization of the intraflagellar transport protein IFT20 to the manchette, suggesting function as an adapter for dynein-mediated protein transport during spermatogenesis. Also plays a role in bone growth where it seems to be required for normal osteoblast differentiation. This is Sperm flagellar protein 2 (SPEF2) from Sus scrofa (Pig).